The following is a 291-amino-acid chain: Phosphatidylglycerol--prolipoprotein diacylglyceryl transferase (291 aa).

7 consecutive transmembrane segments (helical) span residues 21 to 41 (VALH…MWLA), 60 to 80 (LLYA…VLFY), 96 to 116 (WDGG…MIIF), 130 to 150 (FIAP…FING), 198 to 218 (SQLY…NLFI), 225 to 245 (GAVS…VEFF), and 260 to 280 (ISMG…MMVW). Position 143 (Arg143) interacts with a 1,2-diacyl-sn-glycero-3-phospho-(1'-sn-glycerol).

It belongs to the Lgt family.

The protein localises to the cell inner membrane. It carries out the reaction L-cysteinyl-[prolipoprotein] + a 1,2-diacyl-sn-glycero-3-phospho-(1'-sn-glycerol) = an S-1,2-diacyl-sn-glyceryl-L-cysteinyl-[prolipoprotein] + sn-glycerol 1-phosphate + H(+). Its pathway is protein modification; lipoprotein biosynthesis (diacylglyceryl transfer). In terms of biological role, catalyzes the transfer of the diacylglyceryl group from phosphatidylglycerol to the sulfhydryl group of the N-terminal cysteine of a prolipoprotein, the first step in the formation of mature lipoproteins. This Salmonella choleraesuis (strain SC-B67) protein is Phosphatidylglycerol--prolipoprotein diacylglyceryl transferase.